Consider the following 189-residue polypeptide: dCTP deaminase (189 aa).

Residues 112–117, 136–138, Gln157, Tyr171, and Gln181 each bind dCTP; these read KSTYAR and TLE. The active-site Proton donor/acceptor is the Glu138.

Belongs to the dCTP deaminase family. In terms of assembly, homotrimer.

It catalyses the reaction dCTP + H2O + H(+) = dUTP + NH4(+). It functions in the pathway pyrimidine metabolism; dUMP biosynthesis; dUMP from dCTP (dUTP route): step 1/2. Its function is as follows. Catalyzes the deamination of dCTP to dUTP. This is dCTP deaminase from Teredinibacter turnerae (strain ATCC 39867 / T7901).